Here is an 833-residue protein sequence, read N- to C-terminus: CUB domain-containing protein 1 (833 aa).

The first 29 residues, 1-29 (MAHSACGFSVALLGALLLGTARLLRGTEA), serve as a signal peptide directing secretion. The Extracellular segment spans residues 30 to 666 (SEIALPQRSG…VTLTPRTVDL (637 aa)). 7 N-linked (GlcNAc...) asparagine glycosylation sites follow: Asn122, Asn180, Asn205, Asn270, Asn310, Asn342, and Asn386. The region spanning 417-540 (CLDHRYCYRQ…QGLIVSYTPY (124 aa)) is the CUB domain. A disulfide bond links Cys476 and Cys499. The helical transmembrane segment at 667-687 (AVVIGAAGGGALLLFALVLII) threads the bilayer. The Cytoplasmic segment spans residues 688 to 833 (CFVKKKKKVD…HTQGPVETEE (146 aa)). Position 731 is a phosphotyrosine (Tyr731). Positions 783 to 833 (AKFTAEELAPSSPPESESEPYTFSHPNKGEIGVRETDIPLLHTQGPVETEE) are disordered. Residues 809–819 (NKGEIGVRETD) are compositionally biased toward basic and acidic residues.

Interacts with CDH2/N-cadherin, CDH3/P-cadherin, SDC1/syndecan-1, SDC4/syndecan-4 and the serine protease ST14/MT-SP1. Also interacts SRC and PRKCG/protein kinase C gamma. Post-translationally, phosphorylated on tyrosine by kinases of the SRC family such as SRC and YES as well as by the protein kinase C gamma/PRKCG. Dephosphorylated by phosphotyrosine phosphatases. Also phosphorylated by suramin, a heparin analog. Tyrosine phosphorylated in response to dissociation of integrin alpha-6 beta-4 from laminin-5. N-glycosylated. In terms of processing, a soluble form may also be produced by proteolytic cleavage at the cell surface (shedding). Another peptide of 80 kDa (p80) is present in cultured keratinocytes probably due to tryptic cleavage at an unidentified site on the N-terminal side. Converted to p80 by plasmin, a trypsin-like protease.

It localises to the cell membrane. Its function is as follows. May be involved in cell adhesion and cell matrix association. May play a role in the regulation of anchorage versus migration or proliferation versus differentiation via its phosphorylation. May be a novel marker for leukemia diagnosis and for immature hematopoietic stem cell subsets. Belongs to the tetraspanin web involved in tumor progression and metastasis. The protein is CUB domain-containing protein 1 (Cdcp1) of Mus musculus (Mouse).